A 270-amino-acid chain; its full sequence is Glutamate racemase (270 aa).

Substrate-binding positions include Asp-7–Ser-8 and Tyr-39–Gly-40. The active-site Proton donor/acceptor is the Cys-70. A substrate-binding site is contributed by Asn-71–Thr-72. Cys-194 functions as the Proton donor/acceptor in the catalytic mechanism. Thr-195 to His-196 contributes to the substrate binding site.

It belongs to the aspartate/glutamate racemases family.

It carries out the reaction L-glutamate = D-glutamate. The protein operates within cell wall biogenesis; peptidoglycan biosynthesis. In terms of biological role, provides the (R)-glutamate required for cell wall biosynthesis. The protein is Glutamate racemase of Paracoccus denitrificans (strain Pd 1222).